Consider the following 375-residue polypeptide: MMKQYYIGVMSGTSLDGVDLALMDFTLNPPKLMATDFTPMPEKIREKLTALLRSGETSLRNLGEIDHQLGLLYAESINRFLQKVRLKSEDICAVGCHGQTVWHSPNCEFPFTMQIGDMNLVAAKTGITTVGDFRRKDMALGGQGAPLVPAFHQDLFFAAERLTVVLNIGGISNISVLEENCPTVGYDVSVGNALLDSWIELHQGKRYDKDALWAKNGKISTALLTDLLAEPFFQQAPPKSTGRELFNLAWLNKKLEKFTALSQPMPSPQDVQRTLVEFTALSIANELKKLQKSDRTNLLLVCGGGARNPLIMQRLTALLAEWQVSTTSEFGLDIDYVEAAAFAWLAYRRIHNLPSNLPSVTGAKSEVSLGVIFPK.

12-19 (GTSLDGVD) contacts ATP.

It belongs to the anhydro-N-acetylmuramic acid kinase family.

It carries out the reaction 1,6-anhydro-N-acetyl-beta-muramate + ATP + H2O = N-acetyl-D-muramate 6-phosphate + ADP + H(+). It functions in the pathway amino-sugar metabolism; 1,6-anhydro-N-acetylmuramate degradation. The protein operates within cell wall biogenesis; peptidoglycan recycling. Its function is as follows. Catalyzes the specific phosphorylation of 1,6-anhydro-N-acetylmuramic acid (anhMurNAc) with the simultaneous cleavage of the 1,6-anhydro ring, generating MurNAc-6-P. Is required for the utilization of anhMurNAc either imported from the medium or derived from its own cell wall murein, and thus plays a role in cell wall recycling. The chain is Anhydro-N-acetylmuramic acid kinase from Mannheimia succiniciproducens (strain KCTC 0769BP / MBEL55E).